Reading from the N-terminus, the 238-residue chain is Beta-glucanase (238 aa).

The first 26 residues, 1–26 (MMKKKSWFTLMITGVISLFFSVSAFA), serve as a signal peptide directing secretion. The region spanning 29–238 (VFWEPLSYFN…EYDWVKYTSN (210 aa)) is the GH16 domain. Cys-56 and Cys-85 are joined by a disulfide. The Nucleophile role is filled by Glu-129. The active-site Proton donor is Glu-133.

The protein belongs to the glycosyl hydrolase 16 family.

It carries out the reaction Hydrolysis of (1-&gt;4)-beta-D-glucosidic linkages in beta-D-glucans containing (1-&gt;3)- and (1-&gt;4)-bonds.. This chain is Beta-glucanase (gluB), found in Paenibacillus polymyxa (Bacillus polymyxa).